A 1402-amino-acid polypeptide reads, in one-letter code: Phospholipid-transporting ATPase dnf2 (1402 aa).

The next 4 helical transmembrane spans lie at 109–129 (FQNV…ISIF), 135–155 (PGLA…KDAI), 457–477 (LNFI…GIAW), and 501–521 (VVTF…SLYI). The 4-aspartylphosphate intermediate role is filled by aspartate 569. 15 residues coordinate ATP: aspartate 569, lysine 570, threonine 571, glutamate 700, phenylalanine 741, serine 743, lysine 746, lysine 764, arginine 799, threonine 800, threonine 879, glycine 880, aspartate 881, arginine 986, and lysine 992. A Mg(2+)-binding site is contributed by aspartate 569. Position 571 (threonine 571) interacts with Mg(2+). Residue aspartate 1012 participates in Mg(2+) binding. ATP is bound by residues asparagine 1015 and aspartate 1016. Aspartate 1016 is a binding site for Mg(2+). A run of 6 helical transmembrane segments spans residues 1066–1086 (VAEM…TLFW), 1101–1121 (YTYV…VMGV), 1151–1171 (IFIG…FFSF), 1193–1213 (LGVY…ILNQ), 1218–1238 (VFSI…TGVY), and 1260–1280 (FWAV…LFMT). Lysine 1275 is an a 1,2-diacyl-sn-glycero-3-phospho-L-serine binding site.

This sequence belongs to the cation transport ATPase (P-type) (TC 3.A.3) family. Type IV subfamily. Requires Mg(2+) as cofactor.

It is found in the cell membrane. The protein localises to the endoplasmic reticulum membrane. The enzyme catalyses ATP + H2O + phospholipidSide 1 = ADP + phosphate + phospholipidSide 2.. It catalyses the reaction a 1,2-diacyl-sn-glycero-3-phosphoethanolamine(out) + ATP + H2O = a 1,2-diacyl-sn-glycero-3-phosphoethanolamine(in) + ADP + phosphate + H(+). It carries out the reaction a 1,2-diacyl-sn-glycero-3-phosphocholine(out) + ATP + H2O = a 1,2-diacyl-sn-glycero-3-phosphocholine(in) + ADP + phosphate + H(+). The catalysed reaction is a beta-D-glucosyl-(1&lt;-&gt;1')-N-acylsphing-4-enine(out) + ATP + H2O = a beta-D-glucosyl-(1&lt;-&gt;1')-N-acylsphing-4-enine(in) + ADP + phosphate + H(+). The enzyme catalyses a 1,2-diacyl-sn-glycero-3-phospho-L-serine(out) + ATP + H2O = a 1,2-diacyl-sn-glycero-3-phospho-L-serine(in) + ADP + phosphate + H(+). Catalytic component of a P4-ATPase flippase complex which catalyzes the hydrolysis of ATP coupled to the transport of glucosylceramide, phosphatidylcholine, phosphatidylethanolamine, and small amounts of phosphatidylserine from the lumenal to the cytosolic leaflet of the cell membrane and ensures the maintenance of asymmetric distribution of phospholipids. The polypeptide is Phospholipid-transporting ATPase dnf2 (Schizosaccharomyces pombe (strain 972 / ATCC 24843) (Fission yeast)).